The following is a 598-amino-acid chain: Beta-fructofuranosidase, insoluble isoenzyme 2 (598 aa).

An N-terminal signal peptide occupies residues 1 to 25; that stretch reads MGVLGSRVAWAWLVQLLLLQQLAGA. Residue aspartate 69 is part of the active site. Asparagine 164, asparagine 189, and asparagine 348 each carry an N-linked (GlcNAc...) asparagine glycan.

The protein belongs to the glycosyl hydrolase 32 family. As to expression, expressed in leaves and flowers. Weakly expressed in seeds. Expressed in growing roots, node and the rapidly elongating zone of the internode.

Its subcellular location is the secreted. The protein resides in the cell wall. It catalyses the reaction Hydrolysis of terminal non-reducing beta-D-fructofuranoside residues in beta-D-fructofuranosides.. Functionally, cell wall-associated invertase that cleaves sucrose into glucose and fructose and is required for assimilated carbon partitioning during early grain-filling. May be involved in sucrose unloaded in the ovular and stylar vascular tissues for the stimulation of starch synthesis in the developing endosperm during grain-filling. Sugar homeostasis mediated by CIN2/GIF1 plays an important role in constitutive and induced physical and chemical defense against pathogens. The sequence is that of Beta-fructofuranosidase, insoluble isoenzyme 2 (CIN2) from Oryza sativa subsp. japonica (Rice).